The following is a 219-amino-acid chain: Agamous-like MADS-box protein AGL19 (219 aa).

An MADS-box domain is found at 1 to 61 (MVRGKTEMKR…SKLYEFSSSS (61 aa)). Residues 77–96 (GNNHKRNDNSQQARDETSGL) form a disordered region. One can recognise a K-box domain in the interval 86–176 (SQQARDETSG…KEKWLGMGTA (91 aa)).

In terms of assembly, interacts with SOC1 and AGL21. As to expression, mostly expressed in the outer layers of the root meristem (lateral root cap and epidermis) and in the central cylinder cells of mature roots. Also present in rosette leaves and seedlings and, to a lesser extent, in cauline leaves and flowers. Enriched in apices including the shoot apical meristem and developing leaf primordia.

The protein localises to the nucleus. Probable transcription factor that promotes flowering, especially in response to vernalization by short periods of cold, in an FLC-inpedendent manner. This Arabidopsis thaliana (Mouse-ear cress) protein is Agamous-like MADS-box protein AGL19 (AGL19).